A 376-amino-acid chain; its full sequence is Alcohol dehydrogenase class-3 (376 aa).

Serine 1 carries the post-translational modification N-acetylserine. Zn(2+)-binding residues include cysteine 47, histidine 69, cysteine 99, cysteine 102, cysteine 105, cysteine 113, and cysteine 176.

Belongs to the zinc-containing alcohol dehydrogenase family. Class-III subfamily. Homodimer. The cofactor is Zn(2+). Liver and gut.

It is found in the cytoplasm. It catalyses the reaction a primary alcohol + NAD(+) = an aldehyde + NADH + H(+). It carries out the reaction a secondary alcohol + NAD(+) = a ketone + NADH + H(+). The enzyme catalyses S-(hydroxymethyl)glutathione + NADP(+) = S-formylglutathione + NADPH + H(+). The catalysed reaction is S-(hydroxymethyl)glutathione + NAD(+) = S-formylglutathione + NADH + H(+). It catalyses the reaction S-nitrosoglutathione + NADH + H(+) = S-(hydroxysulfenamide)glutathione + NAD(+). Its function is as follows. Class-III ADH is remarkably ineffective in oxidizing ethanol, but it readily catalyzes the oxidation of long-chain primary alcohols and the oxidation of S-(hydroxymethyl) glutathione. Also acts as a S-nitroso-glutathione reductase by catalyzing the NADH-dependent reduction of S-nitrosoglutathione, thereby regulating protein S-nitrosylation. This Myxine glutinosa (Atlantic hagfish) protein is Alcohol dehydrogenase class-3.